Here is a 5412-residue protein sequence, read N- to C-terminus: Mucin-4 (5412 aa).

A signal peptide spans M1–G28. Disordered stretches follow at residues T40–K87 and T142–S249. Residues P43–L4241 are variable number of tandem repeats (VNTR). Low complexity predominate over residues T142 to T163. O-linked (GalNAc...) threonine glycans are attached at residues T154 and T156. Residues P164–W199 show a composition bias toward polar residues. Residues T200–S223 are compositionally biased toward low complexity. Positions F224–S249 are enriched in polar residues. N-linked (GlcNAc...) asparagine glycosylation occurs at N230. A glycan (O-linked (GalNAc...) threonine) is linked at T234. An N-linked (GlcNAc...) asparagine glycan is attached at N255. Composition is skewed to polar residues over residues T267–V285, S306–Q328, and G358–Q367. Disordered regions lie at residues T267–T286, E303–Q328, L353–V383, L438–P473, W488–S580, T592–S853, V868–G963, S983–S1864, A1878–A2078, T2111–G2220, S2232–A2814, I2837–S3306, S3320–G3580, S3592–G3644, S3656–G3756, and V3769–T4223. 3 O-linked (GalNAc...) threonine glycosylation sites follow: T364, T369, and T376. Residues E368–V383 are compositionally biased toward low complexity. Composition is skewed to polar residues over residues A450–A459, W488–A526, and T546–K557. Low complexity-rich tracts occupy residues T558–A577 and S615–S627. A glycan (N-linked (GlcNAc...) asparagine) is linked at N617. 3 O-linked (GalNAc...) threonine glycosylation sites follow: T620, T666, and T688. A compositionally biased stretch (polar residues) spans P628 to S677. Residues T705 to P717 are compositionally biased toward low complexity. Over residues G729–S746 the composition is skewed to polar residues. T747 is a glycosylation site (O-linked (GalNAc...) threonine). The span at T756–T771 shows a compositional bias: low complexity. Positions H772–E789 are enriched in polar residues. A compositionally biased stretch (low complexity) spans P790 to T828. T797, T798, T802, T804, T813, and T814 each carry an O-linked (GalNAc...) threonine glycan. Residues R829–A852 are compositionally biased toward polar residues. 3 O-linked (GalNAc...) threonine glycosylation sites follow: T881, T886, and T892. Residues P885 to A903 are compositionally biased toward low complexity. Over residues M907–A928 the composition is skewed to polar residues. The segment covering T929–P950 has biased composition (low complexity). O-linked (GalNAc...) threonine glycans are attached at residues T931, T934, T938, T943, T945, T948, T952, T954, T1003, T1007, T1012, T1019, T1022, T1023, T1028, T1030, T1035, T1039, T1044, T1051, T1055, T1060, T1062, T1067, T1071, T1076, T1083, T1086, T1087, T1092, T1094, T1099, T1103, T1108, T1110, T1115, T1118, T1119, T1124, T1126, T1131, T1135, T1172, T1179, T1182, T1183, T1188, T1195, T1199, T1204, T1236, T1243, T1246, and T1247. A compositionally biased stretch (polar residues) spans Q951–G963. Residues T1007–P1024 are compositionally biased toward low complexity. Polar residues predominate over residues T1028 to S1054. The span at T1060–T1086 shows a compositional bias: polar residues. The span at T1092–T1118 shows a compositional bias: polar residues. Composition is skewed to polar residues over residues T1124–T1150 and D1157–H1197. Polar residues-rich tracts occupy residues T1204 to H1213 and D1221 to T1246. Residues T1252–A1262 are compositionally biased toward polar residues. The segment covering T1263–T1279 has biased composition (low complexity). O-linked (GalNAc...) threonine glycans are attached at residues T1278, T1279, T1284, T1286, T1291, T1295, T1300, T1307, T1311, T1316, T1323, T1326, T1332, T1339, T1342, T1343, and T1348. The span at L1281 to D1325 shows a compositional bias: polar residues. Polar residues predominate over residues T1332 to T1342. Composition is skewed to polar residues over residues D1349 to T1358 and D1365 to H1405. O-linked (GalNAc...) threonine glycosylation is found at T1380, T1387, T1390, T1391, T1396, T1403, T1407, T1412, T1444, T1451, T1454, and T1455. Polar residues-rich tracts occupy residues T1412 to H1421 and D1429 to T1454. The span at T1460–A1470 shows a compositional bias: polar residues. The segment covering T1471–T1487 has biased composition (low complexity). Residues T1486, T1487, T1492, T1494, T1499, T1503, T1508, T1515, T1519, T1524, T1531, T1534, T1540, T1547, T1550, T1551, T1556, T1563, T1566, T1567, T1572, T1579, T1582, T1583, T1588, T1590, T1598, T1599, T1604, T1611, T1614, T1615, T1620, T1622, T1627, and T1630 are each glycosylated (O-linked (GalNAc...) threonine). A compositionally biased stretch (polar residues) spans L1489 to D1533. The span at T1540 to T1550 shows a compositional bias: polar residues. Residues D1557–T1582 show a composition bias toward polar residues. Residues T1588–T1614 show a composition bias toward polar residues. A compositionally biased stretch (low complexity) spans T1620 to T1631. Positions L1633–H1661 are enriched in polar residues. N1637 is a glycosylation site (N-linked (GlcNAc...) asparagine). Residues T1659, T1663, T1668, T1670, T1675, T1679, T1716, T1723, T1726, T1727, T1732, T1764, T1766, T1812, T1819, T1822, T1823, T1828, T1835, T1838, T1839, T1844, T1854, and T1855 are each glycosylated (O-linked (GalNAc...) threonine). Residues T1668–T1679 show a composition bias toward low complexity. Polar residues-rich tracts occupy residues D1701–H1741, D1749–H1773, and T1812–T1822. Residues T1828–S1840 show a composition bias toward low complexity. 3 stretches are compositionally biased toward polar residues: residues L1841 to S1864, T1892 to T1902, and D1909 to T1950. O-linked (GalNAc...) threonine glycans are attached at residues T1931, T1934, T1935, T1940, T1950, T1951, T1956, T1963, T1995, T1999, T2004, T2006, T2015, T2020, T2027, T2030, T2031, T2036, T2038, T2047, T2052, T2062, T2063, T2132, T2137, T2139, T2142, T2143, T2148, T2150, T2155, T2159, T2164, T2180, T2182, T2187, T2191, T2196, T2198, T2203, T2207, T2244, T2254, and T2255. A compositionally biased stretch (polar residues) spans D1957 to H1981. Polar residues predominate over residues T2004–T2030. The segment covering T2036–H2077 has biased composition (polar residues). Low complexity predominate over residues D2125–P2146. Residues T2148–H2189 are compositionally biased toward polar residues. Composition is skewed to polar residues over residues T2196–T2219 and S2232–T2254. Positions D2261–A2270 are enriched in polar residues. Residues T2271–T2283 are compositionally biased toward low complexity. Residues T2283, T2286, T2287, T2292, T2299, T2303, T2308, T2324, T2331, T2334, T2335, T2340, T2347, T2351, T2356, T2363, T2366, T2367, T2372, T2382, T2383, T2388, T2395, T2398, T2399, and T2406 are each glycosylated (O-linked (GalNAc...) threonine). Residues G2284 to H2301 are compositionally biased toward polar residues. A compositionally biased stretch (polar residues) spans D2309–H2349. Residues T2366 to T2399 are compositionally biased toward low complexity. Composition is skewed to polar residues over residues T2404–H2413 and G2421–H2445. N2437 is a glycosylation site (N-linked (GlcNAc...) asparagine). O-linked (GalNAc...) threonine glycans are attached at residues T2452, T2454, T2459, T2462, T2463, T2468, T2500, T2507, T2510, T2511, T2516, T2518, T2523, and T2526. The span at T2452–S2471 shows a compositional bias: low complexity. A compositionally biased stretch (polar residues) spans D2485–T2510. Positions D2517–H2573 are enriched in polar residues. N-linked (GlcNAc...) asparagine glycosylation occurs at N2533. Residues T2564, T2566, T2571, T2575, T2580, T2582, T2587, T2590, T2591, T2596, T2598, T2619, T2622, T2623, T2628, T2660, T2667, T2670, T2671, T2676, T2683, T2687, T2692, and T2694 are each glycosylated (O-linked (GalNAc...) threonine). The segment covering T2580–T2591 has biased composition (low complexity). Composition is skewed to polar residues over residues D2597–H2637 and D2645–V2691. The span at T2692–S2704 shows a compositional bias: low complexity. Residues L2705–V2723 show a composition bias toward polar residues. Low complexity predominate over residues T2724–T2735. Residues T2740, T2742, T2750, T2751, T2756, T2758, T2763, and T2767 are each glycosylated (O-linked (GalNAc...) threonine). The segment covering T2740–T2750 has biased composition (polar residues). Polar residues predominate over residues T2756–T2798. N2773 is a glycosylation site (N-linked (GlcNAc...) asparagine). O-linked (GalNAc...) threonine glycosylation is found at T2779, T2783, T2788, T2795, T2798, T2799, and T2804. 2 stretches are compositionally biased toward polar residues: residues D2805 to A2814 and I2837 to T2846. O-linked (GalNAc...) threonine glycans are attached at residues T2846, T2847, and T2852. Over residues D2853–H2877 the composition is skewed to polar residues. A compositionally biased stretch (low complexity) spans T2895 to T2907. 17 O-linked (GalNAc...) threonine glycosylation sites follow: T2910, T2911, T2916, T2918, T2923, T2927, T2932, T2939, T2942, T2943, T2948, T2950, T2955, T2959, T2966, T2971, and T2975. Residues T2916–T2942 show a composition bias toward polar residues. Positions T2948–H2973 are enriched in polar residues. 2 stretches are compositionally biased toward polar residues: residues T2980–H2989 and L3009–H3037. O-linked (GalNAc...) threonine glycosylation is found at T3023, T3028, T3035, and T3039. Residues T3044–H3069 show a composition bias toward polar residues. O-linked (GalNAc...) threonine glycosylation is found at T3071, T3076, T3078, T3083, T3087, T3092, T3099, T3102, T3103, T3108, T3115, T3118, T3119, T3124, T3126, T3131, T3135, T3140, T3142, T3147, T3150, T3151, T3156, T3158, T3163, T3167, T3172, T3179, T3182, T3183, T3188, T3220, T3227, T3230, T3231, T3236, T3243, T3247, T3252, and T3254. Residues T3076–T3118 are compositionally biased toward polar residues. Residues T3124–A3134 show a composition bias toward polar residues. The segment covering T3140 to T3151 has biased composition (low complexity). 2 stretches are compositionally biased toward polar residues: residues T3156–H3197 and D3205–V3251. Residues T3252 to S3264 are compositionally biased toward low complexity. The segment covering L3265–V3283 has biased composition (polar residues). The span at T3284–T3295 shows a compositional bias: low complexity. T3294, T3332, T3339, T3342, T3343, T3348, T3350, T3355, and T3359 each carry an O-linked (GalNAc...) threonine glycan. Over residues S3320–A3337 the composition is skewed to polar residues. The span at S3338 to G3356 shows a compositional bias: low complexity. Composition is skewed to polar residues over residues G3365 to T3374 and D3381 to D3405. N-linked (GlcNAc...) asparagine glycosylation occurs at N3397. O-linked (GalNAc...) threonine glycosylation is found at T3398, T3403, T3406, T3412, T3419, T3423, T3428, T3430, T3435, T3439, and T3444. Polar residues predominate over residues T3412–H3421. Low complexity predominate over residues T3428–T3471. An O-linked (GalNAc...) serine glycan is attached at S3445. Residues T3446, T3451, T3454, T3455, T3460, T3462, T3467, T3470, T3471, T3476, T3483, T3486, T3487, T3492, T3499, T3502, T3504, T3508, T3515, T3519, T3524, T3526, T3531, T3535, T3540, T3547, T3550, T3551, T3556, T3567, T3614, T3615, T3622, T3678, T3679, T3686, T3691, T3695, T3700, T3710, T3711, T3716, T3718, T3723, T3727, T3732, T3739, T3743, T3748, T3780, T3787, T3790, T3791, T3796, T3798, T3803, T3807, T3812, T3822, T3823, T3828, T3835, T3839, T3844, T3851, T3854, T3860, T3867, T3871, T3876, T3883, T3886, T3887, T3892, T3894, T3899, T3903, T3935, T3940, T3942, T3947, T3950, T3951, T3956, T3958, T3963, T3967, T3972, T3979, T3983, T3988, T3990, T3995, T3999, T4004, T4006, T4011, T4015, and T4020 are each glycosylated (O-linked (GalNAc...) threonine). Residues L3473 to T3486 show a composition bias toward polar residues. Positions I3493–H3517 are enriched in polar residues. The segment covering T3524–T3550 has biased composition (polar residues). Residues D3557–G3580 are compositionally biased toward polar residues. The segment covering T3604–T3615 has biased composition (low complexity). Polar residues predominate over residues T3620–G3644. Residues T3668–T3679 are compositionally biased toward low complexity. The segment covering T3684–A3694 has biased composition (polar residues). The segment covering T3710–P3728 has biased composition (low complexity). Over residues H3730 to H3741 the composition is skewed to polar residues. Over residues T3780–T3791 the composition is skewed to low complexity. Residues T3796–T3822 show a composition bias toward polar residues. The span at T3860–H3869 shows a compositional bias: polar residues. The span at G3877 to T3886 shows a compositional bias: polar residues. The span at T3892–H3901 shows a compositional bias: polar residues. The segment covering T3940–T3951 has biased composition (low complexity). Residues T3956–H3981 are compositionally biased toward polar residues. A compositionally biased stretch (polar residues) spans T3988–H3997. Over residues T3999–T4011 the composition is skewed to low complexity. Over residues P4018–H4029 the composition is skewed to polar residues. O-linked (GalNAc...) serine glycans are attached at residues S4021, S4023, S4024, and S4026. T4027, T4031, and T4036 each carry an O-linked (GalNAc...) threonine glycan. A compositionally biased stretch (low complexity) spans A4030–T4047. S4037 is a glycosylation site (O-linked (GalNAc...) serine). Residues T4038, T4043, T4046, and T4047 are each glycosylated (O-linked (GalNAc...) threonine). Over residues L4049 to H4093 the composition is skewed to polar residues. N4053 carries N-linked (GlcNAc...) asparagine glycosylation. O-linked (GalNAc...) threonine glycosylation is found at T4078 and T4084. Over residues T4095–T4107 the composition is skewed to low complexity. O-linked (GalNAc...) threonine glycans are attached at residues T4110, T4111, T4116, T4118, T4123, T4127, T4132, T4139, T4142, T4143, T4148, T4158, T4159, T4164, T4171, T4175, T4180, T4182, T4187, T4190, T4191, T4196, T4198, T4203, T4207, T4212, T4214, T4219, T4223, and T4239. Residues T4116–T4142 are compositionally biased toward polar residues. Residues I4149–H4173 show a composition bias toward polar residues. Over residues T4180–T4191 the composition is skewed to low complexity. Residues T4196–H4205 are compositionally biased toward polar residues. The segment covering T4212–T4223 has biased composition (polar residues). The span at A4242 to S4254 shows a compositional bias: low complexity. A disordered region spans residues A4242–Q4288. O-linked (GalNAc...) threonine glycans are attached at residues T4272, T4278, T4280, T4289, T4293, and T4297. The NIDO domain occupies P4397 to E4552. Positions E4553 to R4668 constitute an AMOP domain. The VWFD domain maps to Q4680–L4880. Residues N4715, N4768, N4787, N4796, N4831, N4852, N4875, N4902, N4928, N4946, N4982, N4997, N5045, N5052, N5100, and N5119 are each glycosylated (N-linked (GlcNAc...) asparagine). The region spanning Q5118 to F5157 is the EGF-like 1 domain. 3 disulfides stabilise this stretch: C5122/C5133, C5127/C5145, and C5147/C5156. 3 N-linked (GlcNAc...) asparagine glycosylation sites follow: N5185, N5192, and N5292. Residues V5321 to E5360 form the EGF-like 2 domain. Cystine bridges form between C5324/C5335, C5329/C5344, and C5346/C5359. The chain crosses the membrane as a helical span at residues F5369 to V5389.

In terms of assembly, a heterodimeric complex, composed of a mucin-4 alpha chain and a cysteine-rich transmembrane mucin-4 beta chain. Mucin-4 beta chain interacts with ERBB2 via the EGF-like domain 1. In nonpolarized cells, associates with ERBB2 and ERBB3. Proteolytically cleaved into 2 chains, mucin-4 alpha chain and mucin-4 beta chain. In terms of processing, highly O-glycosylated. Post-translationally, is predominantly N-glycosylated. In terms of tissue distribution, expressed in the thymus, thyroid, lung, trachea, esophagus, stomach, small intestine, colon, testis, prostate, ovary, uterus, placenta, and mammary and salivary glands. Expressed in carcinomas arising from some of these epithelia, such as lung cancers, squamous cell carcinomas of the upper aerodigestive tract, mammary carcinomas, biliary tract, colon, and cervix cancers. Minimally or not expressed in the normal pancreas or chronic pancreatitis, but is highly expressed in pancreatic tumors and pancreatic tumor cell lines.

Its subcellular location is the cell membrane. The protein resides in the secreted. In terms of biological role, membrane-bound mucin, a family of highly glycosylated proteins that constitute the major component of the mucus, the slimy and viscous secretion covering epithelial surfaces. These glycoproteins play important roles in the protection of the epithelium and are implicated in epithelial renewal and differentiation. Regulates cellular behavior through both anti-adhesive effects on cell-cell and cell-extracellular matrix interactions and its ability to act as an intramembrane ligand for ERBB2. Plays an important role in proliferation and differentiation of epithelial cells by inducing specific phosphorylation of ERBB2. In polarized epithelial cells, segregates ERBB2 and other ERBB receptors and prevents ERBB2 from acting as a coreceptor. The interaction with ERBB2 leads to enhanced expression of CDKN1B. The formation of a MUC4-ERBB2-ERBB3-NRG1 complex leads to down-regulation of CDKN1B, resulting in repression of apoptosis and stimulation of proliferation. Its ability to promote tumor growth may be mainly due to repression of apoptosis as opposed to proliferation. The sequence is that of Mucin-4 (MUC4) from Homo sapiens (Human).